Here is a 384-residue protein sequence, read N- to C-terminus: Probable protein phosphatase 2C 48 (384 aa).

The PPM-type phosphatase domain maps to 47–358 (ITGEFSMAVV…DDITVIVVFL (312 aa)). S78 carries the post-translational modification Phosphoserine. 4 residues coordinate Mn(2+): D89, G90, D290, and D349.

This sequence belongs to the PP2C family. Mg(2+) is required as a cofactor. Requires Mn(2+) as cofactor.

It catalyses the reaction O-phospho-L-seryl-[protein] + H2O = L-seryl-[protein] + phosphate. The catalysed reaction is O-phospho-L-threonyl-[protein] + H2O = L-threonyl-[protein] + phosphate. Its function is as follows. May dephosphorylate and repress plasma membrane H(+)-ATPases (PM H(+)-ATPases, e.g. AHA1 and AHA2), thus influencing negatively plant growth and fitness. This is Probable protein phosphatase 2C 48 from Arabidopsis thaliana (Mouse-ear cress).